The sequence spans 904 residues: MLGLGYIGRKLFGTPNDRKVKRTRPLVAKINALEPAFEKLSDAEIVAKTRELQARAQAGESLDALLVEAFANCREAARRALGLRAFDTQLMGGIFLHQGNIAEMKTGEGKTLVATFPAYLNALAGKGVHIVTVNDYLARRDSEWMGKVYRHLGLTCGVVYPFQPDDEKRAAYGADITYATNNELGFDYLRDNMKSSVAEMYQRDHFFAIVDEVDSILIDEARTPLIISGPSQDRSDMYRTLDAYIPFLTEEHYKLDEKQRNATFTEEGNEFLEQKLQADGLLPEGQSLYDPESTTIVHHIGQALRAHKLFFKDQNYVVTDDEIVLIDEFTGRMMKGRRLSDGLHQAIEAKERVTIQPENVTLASVTFQNYFRLYEKLAGMTGTAVTEAEEFGDIYKLGVVEVPTNRPVARKDEHDRVYRTAKEKYAAVIEAIKTAHEKGQPTLVGTTSIEKSEMLSEMLKAEGLPHNVLNARQHEQEAQIVADAGRLGAITIATNMAGRGTDIQLGGNVEMKVQEEIAANPEAAPEEIRARIEAEHAAEKQKVIEAGGLFVLATERHESRRIDNQLRGRSGRQGDPGRSLFFLSLEDDLMRIFGSDRLEGVLSKLGMKEGEAIIHPWVNKSLERAQAKVEGRNFDWRKQLLKFDDVMNDQRKAVFGQRREIMETDEISEIVADMRQQVIDDLIDDFAPPKSYVDQWDIEGMRAAFIDHAGVDLPLADWAAEEGVDQDVLRERVTAALDAVMAQKTEAFGAETMRVIEKQILLQTIDAKWREHLVTLEHLRSVVGFRGYAQRDPLSEYKTESFQLFESMLDSLRYEVTKRLGQIRPMSDEERAEMLRQQAAALAAAEGAADPAEAPAPQPAAQVALAAAPGFVESDPTTWGEPSRNDPCPCGSGEKFKHCHGRLA.

ATP-binding positions include glutamine 89, 107 to 111 (GEGKT), and aspartate 502. A disordered region spans residues 872–892 (VESDPTTWGEPSRNDPCPCGS). The Zn(2+) site is built by cysteine 888, cysteine 890, cysteine 899, and histidine 900.

The protein belongs to the SecA family. Part of the essential protein translocation apparatus which comprises SecA, SecYEG and auxiliary proteins SecDF-YajC and YidC. Homodimer. It depends on Zn(2+) as a cofactor.

The protein localises to the cell inner membrane. It localises to the cytoplasm. It carries out the reaction ATP + H2O + cellular proteinSide 1 = ADP + phosphate + cellular proteinSide 2.. Functionally, part of the Sec protein translocase complex. Interacts with the SecYEG preprotein conducting channel. Has a central role in coupling the hydrolysis of ATP to the transfer of proteins into and across the cell membrane, serving both as a receptor for the preprotein-SecB complex and as an ATP-driven molecular motor driving the stepwise translocation of polypeptide chains across the membrane. This Rhodobacter capsulatus (Rhodopseudomonas capsulata) protein is Protein translocase subunit SecA.